The chain runs to 422 residues: Histidine--tRNA ligase (422 aa).

The protein belongs to the class-II aminoacyl-tRNA synthetase family. As to quaternary structure, homodimer.

The protein resides in the cytoplasm. It carries out the reaction tRNA(His) + L-histidine + ATP = L-histidyl-tRNA(His) + AMP + diphosphate + H(+). The polypeptide is Histidine--tRNA ligase (Vibrio cholerae serotype O1 (strain ATCC 39541 / Classical Ogawa 395 / O395)).